Reading from the N-terminus, the 294-residue chain is Urease accessory protein UreD (294 aa).

A disordered region spans residues 1–22 (MSVEKPVAAGRQNSKATGRHKG).

The protein belongs to the UreD family. In terms of assembly, ureD, UreF and UreG form a complex that acts as a GTP-hydrolysis-dependent molecular chaperone, activating the urease apoprotein by helping to assemble the nickel containing metallocenter of UreC. The UreE protein probably delivers the nickel.

The protein resides in the cytoplasm. Required for maturation of urease via the functional incorporation of the urease nickel metallocenter. This chain is Urease accessory protein UreD, found in Alcanivorax borkumensis (strain ATCC 700651 / DSM 11573 / NCIMB 13689 / SK2).